The primary structure comprises 384 residues: Branched-chain-amino-acid aminotransferase 1, mitochondrial (384 aa).

The transit peptide at 1–18 (MALRRCLPQYSTTSSYLS) directs the protein to the mitochondrion. K231 is modified (N6-(pyridoxal phosphate)lysine).

This sequence belongs to the class-IV pyridoxal-phosphate-dependent aminotransferase family. Pyridoxal 5'-phosphate serves as cofactor.

It is found in the mitochondrion. It carries out the reaction L-leucine + 2-oxoglutarate = 4-methyl-2-oxopentanoate + L-glutamate. The catalysed reaction is L-isoleucine + 2-oxoglutarate = (S)-3-methyl-2-oxopentanoate + L-glutamate. It catalyses the reaction L-valine + 2-oxoglutarate = 3-methyl-2-oxobutanoate + L-glutamate. It participates in amino-acid degradation; L-leucine degradation; 4-methyl-2-oxopentanoate from L-leucine (aminotransferase route): step 1/1. It functions in the pathway amino-acid degradation; L-valine degradation. Converts 2-oxo acids to branched-chain amino acids. Acts on leucine, isoleucine and valine. This Arabidopsis thaliana (Mouse-ear cress) protein is Branched-chain-amino-acid aminotransferase 1, mitochondrial (BCAT1).